The sequence spans 471 residues: Glutamine synthetase (471 aa).

Positions 14-99 (QKIQMIDLKF…ICSIKEPRTG (86 aa)) constitute a GS beta-grasp domain. Positions 106 to 471 (PRVIAQKAID…PYEFYLYYDC (366 aa)) constitute a GS catalytic domain. Mg(2+) is bound by residues glutamate 131 and glutamate 133. Residue glutamate 208 participates in ATP binding. Glutamate 213 and glutamate 221 together coordinate Mg(2+). L-glutamate contacts are provided by residues 265 to 266 (NG) and glycine 266. Histidine 270 contributes to the Mg(2+) binding site. ATP contacts are provided by residues 272–274 (HQS) and serine 274. The L-glutamate site is built by arginine 322, glutamate 328, and arginine 340. ATP contacts are provided by arginine 340, arginine 345, and lysine 354. Glutamate 359 lines the Mg(2+) pocket. Residue arginine 361 coordinates L-glutamate. The residue at position 399 (tyrosine 399) is an O-AMP-tyrosine.

This sequence belongs to the glutamine synthetase family. In terms of assembly, oligomer of 12 subunits arranged in the form of two hexagons. Mg(2+) serves as cofactor.

It is found in the cytoplasm. The enzyme catalyses L-glutamate + NH4(+) + ATP = L-glutamine + ADP + phosphate + H(+). The activity of this enzyme could be controlled by adenylation under conditions of abundant glutamine. In terms of biological role, involved in nitrogen metabolism via ammonium assimilation. Catalyzes the ATP-dependent biosynthesis of glutamine from glutamate and ammonia. This chain is Glutamine synthetase, found in Microchaete diplosiphon (Fremyella diplosiphon).